Here is a 406-residue protein sequence, read N- to C-terminus: Vacuole membrane protein 1 (406 aa).

Basic and acidic residues predominate over residues 1–21; that stretch reads MAENGKNCDQRRVAMNKEHHN. The disordered stretch occupies residues 1-35; it reads MAENGKNCDQRRVAMNKEHHNGNFTDPSSVNEKKR. N-acetylalanine is present on alanine 2. Residues 2–43 are Cytoplasmic-facing; it reads AENGKNCDQRRVAMNKEHHNGNFTDPSSVNEKKRREREERQN. The helical transmembrane segment at 44–64 threads the bilayer; it reads IVLWRQPLITLQYFSLEILVI. The Extracellular portion of the chain corresponds to 65–77; sequence LKEWTSKLWHRQS. A helical membrane pass occupies residues 78–98; that stretch reads IVVSFLLLLAVLIATYYVEGV. At 99–109 the chain is on the cytoplasmic side; it reads HQQYVQRIEKQ. A helical transmembrane segment spans residues 110–130; it reads FLLYAYWIGLGILSSVGLGTG. Residues 131–250 lie on the Extracellular side of the membrane; it reads LHTFLLYLGP…ASRAKLAVQK (120 aa). Residues 173–316 are VTT domain; sequence GTEGTISLWS…FVIITFSKHI (144 aa). The chain crosses the membrane as a helical span at residues 251–271; sequence LVQKVGFFGILACASIPNPLF. Over 272–273 the chain is Cytoplasmic; that stretch reads DL. Residues 274-294 form a helical membrane-spanning segment; sequence AGITCGHFLVPFWTFFGATLI. Over 295–305 the chain is Extracellular; it reads GKAIIKMHIQK. A helical transmembrane segment spans residues 306 to 326; it reads IFVIITFSKHIVEQMVAFIGA. Over 327–363 the chain is Cytoplasmic; it reads VPGIGPSLQKPFQEYLEAQRQKLHHKSEMGTPQGENW. The helical transmembrane segment at 364–384 threads the bilayer; sequence LSWMFEKLVVVMVCYFILSII. Topologically, residues 385-406 are extracellular; it reads NSMAQSYAKRIQQRLNSEEKTK.

The protein belongs to the VMP1 family. As to quaternary structure, interacts with BECN1. Interacts with TJP1. Interacts with TP53INP2. Interacts with TMEM41B. Interacts with ATP2A2, PLN and SLN; competes with PLN and SLN to prevent them from forming an inhibitory complex with ATP2A2. Interacts with ATG2A.

It localises to the endoplasmic reticulum-Golgi intermediate compartment membrane. The protein resides in the cell membrane. It is found in the vacuole membrane. The protein localises to the endoplasmic reticulum membrane. It catalyses the reaction a 1,2-diacyl-sn-glycero-3-phospho-L-serine(in) = a 1,2-diacyl-sn-glycero-3-phospho-L-serine(out). The catalysed reaction is cholesterol(in) = cholesterol(out). The enzyme catalyses a 1,2-diacyl-sn-glycero-3-phosphocholine(in) = a 1,2-diacyl-sn-glycero-3-phosphocholine(out). It carries out the reaction a 1,2-diacyl-sn-glycero-3-phosphoethanolamine(in) = a 1,2-diacyl-sn-glycero-3-phosphoethanolamine(out). Its function is as follows. Phospholipid scramblase involved in lipid homeostasis and membrane dynamics processes. Has phospholipid scramblase activity toward cholesterol and phosphatidylserine, as well as phosphatidylethanolamine and phosphatidylcholine. Required for autophagosome formation: participates in early stages of autophagosome biogenesis at the endoplasmic reticulum (ER) membrane by reequilibrating the leaflets of the ER as lipids are extracted by ATG2 (ATG2A or ATG2B) to mediate autophagosome assembly. Regulates ATP2A2 activity to control ER-isolation membrane contacts for autophagosome formation. In addition to autophagy, involved in other processes in which phospholipid scramblase activity is required. Modulates ER contacts with lipid droplets, mitochondria and endosomes. Plays an essential role in formation of cell junctions. Upon stress such as bacterial and viral infection, promotes formation of cytoplasmic vacuoles followed by cell death. Involved in the cytoplasmic vacuolization of acinar cells during the early stage of acute pancreatitis. Functionally, (Microbial infection) Host factor required for infection by all flaviviruses tested such as Zika virus and Yellow fever virus. Probably required post-entry of the virus to facilitate the ER membrane remodeling necessary to form replication organelles. The sequence is that of Vacuole membrane protein 1 from Homo sapiens (Human).